Consider the following 281-residue polypeptide: Bis(5'-nucleosyl)-tetraphosphatase, symmetrical (281 aa).

Belongs to the Ap4A hydrolase family.

It carries out the reaction P(1),P(4)-bis(5'-adenosyl) tetraphosphate + H2O = 2 ADP + 2 H(+). In terms of biological role, hydrolyzes diadenosine 5',5'''-P1,P4-tetraphosphate to yield ADP. This chain is Bis(5'-nucleosyl)-tetraphosphatase, symmetrical, found in Pectobacterium atrosepticum (strain SCRI 1043 / ATCC BAA-672) (Erwinia carotovora subsp. atroseptica).